The sequence spans 1021 residues: Sodium/potassium-transporting ATPase subunit alpha-1 (1021 aa).

A propeptide spanning residues methionine 1–glycine 5 is cleaved from the precursor. The segment covering methionine 1–glutamate 11 has biased composition (basic and acidic residues). Residues methionine 1–valine 37 form a disordered region. Topologically, residues glycine 6–proline 85 are cytoplasmic. Lysine 9 carries the post-translational modification N6-acetyllysine. Tyrosine 10 is modified (phosphotyrosine). Residue serine 16 is modified to Phosphoserine; by PKC. Lysine 21 carries the N6-acetyllysine modification. The segment covering lysine 26–valine 37 has biased composition (basic and acidic residues). Residues serine 38 and serine 45 each carry the phosphoserine modification. The tract at residues proline 80–proline 82 is phosphoinositide-3 kinase binding. The chain crosses the membrane as a helical span at residues glutamate 86–alanine 106. The Extracellular segment spans residues isoleucine 107 to tyrosine 129. A helical transmembrane segment spans residues leucine 130–alanine 150. At lysine 151–isoleucine 286 the chain is on the cytoplasmic side. The tract at residues serine 214–asparagine 233 is disordered. Serine 226 is modified (phosphoserine). Tyrosine 258 is subject to Phosphotyrosine. A helical transmembrane segment spans residues glutamate 287–isoleucine 306. At leucine 307 to alanine 318 the chain is on the extracellular side. Residues valine 319 to alanine 336 traverse the membrane as a helical segment. Over threonine 337–leucine 770 the chain is Cytoplasmic. The active-site 4-aspartylphosphate intermediate is aspartate 374. Phosphoserine occurs at positions 450 and 482. Position 485 (lysine 485) interacts with ATP. Tyrosine 540 carries the phosphotyrosine modification. The interval arginine 594–aspartate 715 is mediates interaction with SCN7A. Lysine 659 carries the N6-succinyllysine modification. Serine 666 carries the post-translational modification Phosphoserine. Residues aspartate 715 and aspartate 719 each coordinate Mg(2+). Residues lysine 771–isoleucine 790 form a helical membrane-spanning segment. Residues phenylalanine 791–leucine 800 are Extracellular-facing. A helical transmembrane segment spans residues glycine 801–alanine 821. The Cytoplasmic portion of the chain corresponds to tyrosine 822–lysine 841. Residues leucine 842–phenylalanine 864 form a helical membrane-spanning segment. At phenylalanine 865–cysteine 916 the chain is on the extracellular side. A helical membrane pass occupies residues histidine 917–lysine 936. Residues threonine 937–asparagine 949 lie on the Cytoplasmic side of the membrane. Serine 941 is modified (phosphoserine; by PKA). A helical membrane pass occupies residues lysine 950–tyrosine 968. Residues cysteine 969–proline 983 lie on the Extracellular side of the membrane. The helical transmembrane segment at threonine 984–lysine 1004 threads the bilayer. The Cytoplasmic segment spans residues leucine 1005–tyrosine 1021.

This sequence belongs to the cation transport ATPase (P-type) (TC 3.A.3) family. Type IIC subfamily. As to quaternary structure, the sodium/potassium-transporting ATPase is composed of a catalytic alpha subunit, an auxiliary non-catalytic beta subunit and an additional regulatory subunit. Interacts with regulatory subunit FXYD1. Interacts with regulatory subunit FXYD3. Interacts with SIK1. Interacts with SLC35G1 and STIM1. Interacts with CLN3; this interaction regulates the sodium/potassium-transporting ATPase complex localization at the plasma membrane. Interacts with SCN7A; activates ATP1A1 P-type sodium:potassium-exchanging transporter activity which indirectly signals to nearby neurons to regulate sodium homeostasis. In terms of processing, phosphorylation on Tyr-10 modulates pumping activity. Phosphorylation of Ser-941 by PKA modulates the response of ATP1A1 to PKC. Dephosphorylation by protein phosphatase 2A (PP2A) following increases in intracellular sodium, leading to increase catalytic activity.

Its subcellular location is the cell membrane. It is found in the basolateral cell membrane. The protein resides in the sarcolemma. It localises to the cell projection. The protein localises to the axon. Its subcellular location is the melanosome. The enzyme catalyses K(+)(out) + Na(+)(in) + ATP + H2O = K(+)(in) + Na(+)(out) + ADP + phosphate + H(+). This is the catalytic component of the active enzyme, which catalyzes the hydrolysis of ATP coupled with the exchange of sodium and potassium ions across the plasma membrane. This action creates the electrochemical gradient of sodium and potassium ions, providing the energy for active transport of various nutrients. Could also be part of an osmosensory signaling pathway that senses body-fluid sodium levels and controls salt intake behavior as well as voluntary water intake to regulate sodium homeostasis. The chain is Sodium/potassium-transporting ATPase subunit alpha-1 (ATP1A1) from Equus caballus (Horse).